The primary structure comprises 189 residues: Elongation factor P (189 aa).

Belongs to the elongation factor P family.

Its subcellular location is the cytoplasm. It functions in the pathway protein biosynthesis; polypeptide chain elongation. Functionally, involved in peptide bond synthesis. Stimulates efficient translation and peptide-bond synthesis on native or reconstituted 70S ribosomes in vitro. Probably functions indirectly by altering the affinity of the ribosome for aminoacyl-tRNA, thus increasing their reactivity as acceptors for peptidyl transferase. In Aster yellows witches'-broom phytoplasma (strain AYWB), this protein is Elongation factor P.